Consider the following 214-residue polypeptide: Thymidylate kinase (214 aa).

12–19 (GLDGSGKS) is an ATP binding site.

The protein belongs to the thymidylate kinase family.

It catalyses the reaction dTMP + ATP = dTDP + ADP. Its function is as follows. Phosphorylation of dTMP to form dTDP in both de novo and salvage pathways of dTTP synthesis. The protein is Thymidylate kinase of Bdellovibrio bacteriovorus (strain ATCC 15356 / DSM 50701 / NCIMB 9529 / HD100).